The primary structure comprises 289 residues: ATP synthase gamma chain (289 aa).

The protein belongs to the ATPase gamma chain family. F-type ATPases have 2 components, CF(1) - the catalytic core - and CF(0) - the membrane proton channel. CF(1) has five subunits: alpha(3), beta(3), gamma(1), delta(1), epsilon(1). CF(0) has three main subunits: a, b and c.

Its subcellular location is the cell inner membrane. Functionally, produces ATP from ADP in the presence of a proton gradient across the membrane. The gamma chain is believed to be important in regulating ATPase activity and the flow of protons through the CF(0) complex. The polypeptide is ATP synthase gamma chain (Cereibacter sphaeroides (strain ATCC 17023 / DSM 158 / JCM 6121 / CCUG 31486 / LMG 2827 / NBRC 12203 / NCIMB 8253 / ATH 2.4.1.) (Rhodobacter sphaeroides)).